The primary structure comprises 116 residues: Large ribosomal subunit protein bL17 (116 aa).

Belongs to the bacterial ribosomal protein bL17 family. As to quaternary structure, part of the 50S ribosomal subunit. Contacts protein L32.

The chain is Large ribosomal subunit protein bL17 from Helicobacter pylori (strain J99 / ATCC 700824) (Campylobacter pylori J99).